The sequence spans 1460 residues: Ankyrin repeat-containing protein kinase A (1460 aa).

Disordered stretches follow at residues 1-32, 57-181, 216-259, 272-311, 329-354, 374-510, and 551-608; these read MSIKLPLSNINSGGNSNNSSSSNSTSNNNINI, IKQQ…HKSH, RENE…ASST, STSNAATNTNTNANTTSTTKTTSTVRSTSPTQFKPRVEFD, SSPSDFRLNPPSNVHMPTSSLSTSTS, FTPS…SSNP, and CPSA…SSIP. Composition is skewed to low complexity over residues 8–32, 61–86, and 111–128; these read SNINSGGNSNNSSSSNSTSNNNINI, SNNNTSTSVCVSSIHSSSPISSPTSH, and SSGSNSSSSSSGSNNNNN. Positions 129–140 are enriched in polar residues; it reads QIKTSNGMNKPN. The span at 149–162 shows a compositional bias: basic and acidic residues; it reads KPRENSQNKIDDNK. Low complexity-rich tracts occupy residues 220–259 and 272–300; these read NNNNSSNNNSNNNNNNNNNNNNSNNINNVNGNKSSLASST and STSNAATNTNTNANTTSTTKTTSTVRSTS. 2 stretches are compositionally biased toward polar residues: residues 329-345 and 384-404; these read SSPSDFRLNPPSNVHMP and PTNSSQVDTLQMSTESITIQP. Positions 405 to 422 are enriched in low complexity; the sequence is SSLDSSSESVSDGLQSVS. Positions 423–434 are enriched in polar residues; it reads GSPVTASPSPTI. Over residues 435-461 the composition is skewed to low complexity; that stretch reads SNNTNATTTNNNNNTNTNNNNNNNNNQ. Residues 462–472 are compositionally biased toward basic residues; the sequence is HNHHHHQHSHS. The interval 467–667 is interaction with 14-3-3 protein; that stretch reads HQHSHSQQHD…IFRGCGIPLD (201 aa). Positions 486–497 are enriched in low complexity; it reads PSSPTSPTLLPS. A Phorbol-ester/DAG-type zinc finger spans residues 499–551; it reads THDFSSEYSSNPGGKCAICRKPLWSFPISDKSRRCRDCSLVVHRACVPLATEC. Residues 559–568 show a composition bias toward polar residues; sequence SKLSVPNGNQ. The segment covering 569–608 has biased composition (low complexity); sequence SNSSSSSSSSSSSSSSSNSSSSNTKGHSRTPSSPSVSSIP. The region spanning 653–724 is the GRAM domain; that stretch reads RDFHFIFRGC…SNIASIEKRS (72 aa). 5 ANK repeats span residues 814-843, 852-883, 887-920, 924-955, and 959-988; these read SKEILLMSAIKNNNLDMVVTLLNYYCQVNS, KGYTPLHNAVFSECSDQIFMHLLNQKEVRVRE, DGNTPLHYFCQKFKSPECQRIVQAMIEKGANINE, NGETPLHKAIFNHSVRLLMVYILLKNNANVNI, and AGESPLHYAVRLGRLDVAKMLLAAGADPTI. Residues 1112–1375 enclose the Protein kinase domain; sequence LEYTEKIGSG…ATEAMTALAV (264 aa). ATP is bound by residues 1118 to 1126 and K1139; that span reads IGSGASGKV. D1231 acts as the Proton acceptor in catalysis. Residues 1293–1313 traverse the membrane as a helical segment; it reads MGIVMWEIVYCVVYGCYMIPY. Residues 1425–1460 are a coiled coil; that stretch reads PEEEQIYQEAMEKQRRNQEASANRNQKNKELLNNNN. A disordered region spans residues 1434–1460; the sequence is AMEKQRRNQEASANRNQKNKELLNNNN.

This sequence belongs to the protein kinase superfamily. TKL Ser/Thr protein kinase family.

The protein localises to the cytoplasm. It is found in the cytoskeleton. Its subcellular location is the membrane. It localises to the nucleus. It carries out the reaction L-seryl-[protein] + ATP = O-phospho-L-seryl-[protein] + ADP + H(+). It catalyses the reaction L-threonyl-[protein] + ATP = O-phospho-L-threonyl-[protein] + ADP + H(+). In terms of biological role, involved in the development of the fruiting body. Overexpression phenocopies the spnA null phenotype. This is Ankyrin repeat-containing protein kinase A (arkA) from Dictyostelium discoideum (Social amoeba).